A 492-amino-acid chain; its full sequence is Argininosuccinate lyase (492 aa).

It belongs to the lyase 1 family. Argininosuccinate lyase subfamily.

It localises to the cytoplasm. The enzyme catalyses 2-(N(omega)-L-arginino)succinate = fumarate + L-arginine. Its pathway is amino-acid biosynthesis; L-arginine biosynthesis; L-arginine from L-ornithine and carbamoyl phosphate: step 3/3. This chain is Argininosuccinate lyase, found in Methanocorpusculum labreanum (strain ATCC 43576 / DSM 4855 / Z).